The sequence spans 68 residues: Conotoxin Lt5.11 (68 aa).

Residues methionine 1 to proline 19 form the signal peptide. Positions lysine 20–alanine 54 are excised as a propeptide.

The protein belongs to the conotoxin T superfamily. Post-translationally, contains 2 disulfide bonds that can be either 'C1-C3, C2-C4' or 'C1-C4, C2-C3', since these disulfide connectivities have been observed for conotoxins with cysteine framework V (for examples, see AC P0DQQ7 and AC P81755). As to expression, expressed by the venom duct.

It localises to the secreted. The protein is Conotoxin Lt5.11 of Conus litteratus (Lettered cone).